A 74-amino-acid chain; its full sequence is U4-theraphotoxin-Cg1a (74 aa).

The N-terminal stretch at 1-19 (MNATIFAFLLLLNLAMHNA) is a signal peptide. The propeptide occupies 20 to 39 (TEQSSETDMDDTLLIPEINR). 3 disulfide bridges follow: Cys42-Cys56, Cys49-Cys61, and Cys55-Cys71.

The protein belongs to the neurotoxin 36 family. 01 subfamily. In terms of tissue distribution, expressed by the venom gland.

It localises to the secreted. Its function is as follows. Probable ion channel inhibitor. This is U4-theraphotoxin-Cg1a from Chilobrachys guangxiensis (Chinese earth tiger tarantula).